We begin with the raw amino-acid sequence, 1073 residues long: Carbamoyl phosphate synthase large chain (1073 aa).

The carboxyphosphate synthetic domain stretch occupies residues 1-402 (MPRRIDVRKV…ALQKAIRMLD (402 aa)). Positions 129, 169, 175, 176, 208, 210, 215, 241, 242, 243, 284, and 299 each coordinate ATP. In terms of domain architecture, ATP-grasp 1 spans 133–328 (RETMMKAGLP…LAYIAAKLAL (196 aa)). Mg(2+) contacts are provided by Gln284, Glu299, and Asn301. The Mn(2+) site is built by Gln284, Glu299, and Asn301. The oligomerization domain stretch occupies residues 403–555 (IGEPGVVAGP…MSYNAYEDDE (153 aa)). Residues 556 to 944 (PITTGRPRLI…LKSWLSVQGN (389 aa)) are carbamoyl phosphate synthetic domain. The region spanning 681 to 871 (SQLLEELGIK…LMRAAAEAAL (191 aa)) is the ATP-grasp 2 domain. ATP-binding residues include Arg717, Lys756, Leu758, Glu763, Gly787, Val788, His789, Ser790, Gln830, and Glu842. Residues Gln830, Glu842, and Asn844 each contribute to the Mg(2+) site. Mn(2+) is bound by residues Gln830, Glu842, and Asn844. The MGS-like domain maps to 944–1073 (NRIPPAGSIV…EYWGPNVEPF (130 aa)). An allosteric domain region spans residues 945–1073 (RIPPAGSIVL…EYWGPNVEPF (129 aa)).

Belongs to the CarB family. In terms of assembly, composed of two chains; the small (or glutamine) chain promotes the hydrolysis of glutamine to ammonia, which is used by the large (or ammonia) chain to synthesize carbamoyl phosphate. Tetramer of heterodimers (alpha,beta)4. The cofactor is Mg(2+). Requires Mn(2+) as cofactor.

The catalysed reaction is hydrogencarbonate + L-glutamine + 2 ATP + H2O = carbamoyl phosphate + L-glutamate + 2 ADP + phosphate + 2 H(+). It catalyses the reaction hydrogencarbonate + NH4(+) + 2 ATP = carbamoyl phosphate + 2 ADP + phosphate + 2 H(+). Its pathway is amino-acid biosynthesis; L-arginine biosynthesis; carbamoyl phosphate from bicarbonate: step 1/1. The protein operates within pyrimidine metabolism; UMP biosynthesis via de novo pathway; (S)-dihydroorotate from bicarbonate: step 1/3. In terms of biological role, large subunit of the glutamine-dependent carbamoyl phosphate synthetase (CPSase). CPSase catalyzes the formation of carbamoyl phosphate from the ammonia moiety of glutamine, carbonate, and phosphate donated by ATP, constituting the first step of 2 biosynthetic pathways, one leading to arginine and/or urea and the other to pyrimidine nucleotides. The large subunit (synthetase) binds the substrates ammonia (free or transferred from glutamine from the small subunit), hydrogencarbonate and ATP and carries out an ATP-coupled ligase reaction, activating hydrogencarbonate by forming carboxy phosphate which reacts with ammonia to form carbamoyl phosphate. The polypeptide is Carbamoyl phosphate synthase large chain (Hyperthermus butylicus (strain DSM 5456 / JCM 9403 / PLM1-5)).